The sequence spans 201 residues: Small ribosomal subunit protein uS4B (201 aa).

The 64-residue stretch at 93–156 (QRLDTVVYRL…RSLAVVRESL (64 aa)) folds into the S4 RNA-binding domain.

The protein belongs to the universal ribosomal protein uS4 family. Part of the 30S ribosomal subunit. Contacts protein S5. The interaction surface between S4 and S5 is involved in control of translational fidelity.

Its function is as follows. One of the primary rRNA binding proteins, it binds directly to 16S rRNA where it nucleates assembly of the body of the 30S subunit. In terms of biological role, with S5 and S12 plays an important role in translational accuracy. The sequence is that of Small ribosomal subunit protein uS4B from Symbiobacterium thermophilum (strain DSM 24528 / JCM 14929 / IAM 14863 / T).